The chain runs to 87 residues: Small ribosomal subunit protein bS20 (87 aa).

The protein belongs to the bacterial ribosomal protein bS20 family.

Binds directly to 16S ribosomal RNA. This chain is Small ribosomal subunit protein bS20, found in Shigella flexneri serotype 5b (strain 8401).